Reading from the N-terminus, the 158-residue chain is Ribosome maturation factor RimP (158 aa).

This sequence belongs to the RimP family.

The protein localises to the cytoplasm. Functionally, required for maturation of 30S ribosomal subunits. The polypeptide is Ribosome maturation factor RimP (Pseudomonas fluorescens (strain SBW25)).